The following is a 103-amino-acid chain: Large ribosomal subunit protein bL21 (103 aa).

Belongs to the bacterial ribosomal protein bL21 family. In terms of assembly, part of the 50S ribosomal subunit. Contacts protein L20.

In terms of biological role, this protein binds to 23S rRNA in the presence of protein L20. The chain is Large ribosomal subunit protein bL21 from Clostridium botulinum (strain Alaska E43 / Type E3).